The sequence spans 378 residues: Probable protein phosphatase 2C 55 (378 aa).

Disordered stretches follow at residues 1–59 and 79–115; these read MRRH…ASKG and EGEA…GVGC. Residues 7–26 show a composition bias toward low complexity; sequence LGLLRRAAASSTSAASSRAG. Over residues 92-104 the composition is skewed to basic residues; that stretch reads GGRRGRNSKRQPP. The PPM-type phosphatase domain maps to 122 to 369; sequence SWGYSSFQGR…DNVTCIVLQF (248 aa). Positions 158, 159, 321, and 360 each coordinate Mn(2+).

Belongs to the PP2C family. It depends on Mg(2+) as a cofactor. Requires Mn(2+) as cofactor.

It catalyses the reaction O-phospho-L-seryl-[protein] + H2O = L-seryl-[protein] + phosphate. The catalysed reaction is O-phospho-L-threonyl-[protein] + H2O = L-threonyl-[protein] + phosphate. The chain is Probable protein phosphatase 2C 55 from Oryza sativa subsp. japonica (Rice).